The primary structure comprises 319 residues: Glutathione synthetase (319 aa).

One can recognise an ATP-grasp domain in the interval 125 to 311; it reads EKLFATLFPQ…IGGLLMDAIE (187 aa). Residue 151-208 participates in ATP binding; it reads FAEQQGDVILKPLDGMGGASIFRHRAGDPNLSVILETLTAHGTQQIMAQGYLPAIKDG. The Mg(2+) site is built by Glu282 and Asn284.

The protein belongs to the prokaryotic GSH synthase family. Requires Mg(2+) as cofactor. The cofactor is Mn(2+).

The catalysed reaction is gamma-L-glutamyl-L-cysteine + glycine + ATP = glutathione + ADP + phosphate + H(+). It participates in sulfur metabolism; glutathione biosynthesis; glutathione from L-cysteine and L-glutamate: step 2/2. The polypeptide is Glutathione synthetase (Pseudomonas syringae pv. tomato (strain ATCC BAA-871 / DC3000)).